The chain runs to 556 residues: Potassium-transporting ATPase potassium-binding subunit (556 aa).

The next 10 helical transmembrane spans lie at 6-26 (AGIA…VPLG), 65-85 (SVLA…LVQG), 133-153 (GLAV…IALV), 176-196 (LRIL…GGAI), 249-269 (PTPW…FSLP), 283-303 (VAIA…TMLL), 378-398 (GLYG…LMVG), 415-435 (LAAS…AIAM), 483-503 (ALGL…LALA), and 526-546 (FVGM…LPIL).

This sequence belongs to the KdpA family. The system is composed of three essential subunits: KdpA, KdpB and KdpC.

The protein resides in the cell membrane. In terms of biological role, part of the high-affinity ATP-driven potassium transport (or Kdp) system, which catalyzes the hydrolysis of ATP coupled with the electrogenic transport of potassium into the cytoplasm. This subunit binds the extracellular potassium ions and delivers the ions to the membrane domain of KdpB through an intramembrane tunnel. This Mycolicibacterium smegmatis (strain ATCC 700084 / mc(2)155) (Mycobacterium smegmatis) protein is Potassium-transporting ATPase potassium-binding subunit.